Here is a 396-residue protein sequence, read N- to C-terminus: Argininosuccinate synthase (396 aa).

Residues 10-18 (AYSGGLDTS) and Ala-37 contribute to the ATP site. The L-citrulline site is built by Tyr-88 and Ser-93. An ATP-binding site is contributed by Gly-118. L-aspartate is bound by residues Thr-120, Asn-124, and Asp-125. L-citrulline is bound at residue Asn-124. Residues Arg-128, Ser-176, Ser-185, Glu-261, and Tyr-273 each contribute to the L-citrulline site.

Belongs to the argininosuccinate synthase family. Type 1 subfamily. Homotetramer.

The protein resides in the cytoplasm. The enzyme catalyses L-citrulline + L-aspartate + ATP = 2-(N(omega)-L-arginino)succinate + AMP + diphosphate + H(+). It functions in the pathway amino-acid biosynthesis; L-arginine biosynthesis; L-arginine from L-ornithine and carbamoyl phosphate: step 2/3. This chain is Argininosuccinate synthase, found in Nitratidesulfovibrio vulgaris (strain ATCC 29579 / DSM 644 / CCUG 34227 / NCIMB 8303 / VKM B-1760 / Hildenborough) (Desulfovibrio vulgaris).